The chain runs to 236 residues: uncharacterized protein (236 aa).

Residues 5–73 (QSTVENAKEK…DRKGWFVTQP (69 aa)) enclose the HTH gntR-type domain. A DNA-binding region (H-T-H motif) is located at residues 33-52 (ERELGELLGIKRMTLRQALL).

This is an uncharacterized protein from Escherichia coli O157:H7.